The following is a 358-amino-acid chain: Putative purine permease 12 (358 aa).

Helical transmembrane passes span 29–49 (WILV…SVLL), 62–82 (WIST…LSLL), 100–120 (LVWI…LYSV), 128–148 (STYS…YYYI), 153–173 (ITCL…LVSL), 189–209 (LIGC…LSLM), 235–255 (VASC…LLSV), 280–299 (LGCV…FSNL), 300–316 (ISTL…IAVF), and 320–340 (LTEV…FYIY).

The protein belongs to the purine permeases (TC 2.A.7.14) family.

It is found in the membrane. This chain is Putative purine permease 12 (PUP12), found in Arabidopsis thaliana (Mouse-ear cress).